Consider the following 288-residue polypeptide: Eukaryotic translation initiation factor 3 subunit G (288 aa).

A disordered region spans residues 1-33 (MSRVANNRDWADDEDLEDSNELPQSTTTTNKDG). Acidic residues predominate over residues 11-20 (ADDEDLEDSN). Positions 21 to 33 (ELPQSTTTTNKDG) are enriched in polar residues. The RRM domain maps to 208-286 (ATLRVTNVSE…LILRVEFAKK (79 aa)).

It belongs to the eIF-3 subunit G family. Component of the eukaryotic translation initiation factor 3 (eIF-3) complex.

It is found in the cytoplasm. In terms of biological role, RNA-binding component of the eukaryotic translation initiation factor 3 (eIF-3) complex, which is involved in protein synthesis of a specialized repertoire of mRNAs and, together with other initiation factors, stimulates binding of mRNA and methionyl-tRNAi to the 40S ribosome. The eIF-3 complex specifically targets and initiates translation of a subset of mRNAs involved in cell proliferation. This subunit can bind 18S rRNA. This is Eukaryotic translation initiation factor 3 subunit G (tif35) from Sclerotinia sclerotiorum (strain ATCC 18683 / 1980 / Ss-1) (White mold).